Here is a 102-residue protein sequence, read N- to C-terminus: NADH-quinone oxidoreductase subunit K (102 aa).

3 consecutive transmembrane segments (helical) span residues 6 to 26 (LIGIMILAAGLFAVGVFGVLA), 30 to 50 (MLFQLVALEVALSGPALGFIA), and 63 to 83 (MFILVLTLAAAEVAVGLALFL).

It belongs to the complex I subunit 4L family. NDH-1 is composed of 14 different subunits. Subunits NuoA, H, J, K, L, M, N constitute the membrane sector of the complex.

The protein resides in the cell inner membrane. The enzyme catalyses a quinone + NADH + 5 H(+)(in) = a quinol + NAD(+) + 4 H(+)(out). Functionally, NDH-1 shuttles electrons from NADH, via FMN and iron-sulfur (Fe-S) centers, to quinones in the respiratory chain. The immediate electron acceptor for the enzyme in this species is believed to be ubiquinone. Couples the redox reaction to proton translocation (for every two electrons transferred, four hydrogen ions are translocated across the cytoplasmic membrane), and thus conserves the redox energy in a proton gradient. This chain is NADH-quinone oxidoreductase subunit K, found in Rhodopseudomonas palustris (strain TIE-1).